Here is a 185-residue protein sequence, read N- to C-terminus: Ribosome-recycling factor (185 aa).

Belongs to the RRF family.

Its subcellular location is the cytoplasm. In terms of biological role, responsible for the release of ribosomes from messenger RNA at the termination of protein biosynthesis. May increase the efficiency of translation by recycling ribosomes from one round of translation to another. The polypeptide is Ribosome-recycling factor (Heliobacterium modesticaldum (strain ATCC 51547 / Ice1)).